A 100-amino-acid chain; its full sequence is Integration host factor subunit alpha (100 aa).

Belongs to the bacterial histone-like protein family. As to quaternary structure, heterodimer of an alpha and a beta chain.

This protein is one of the two subunits of integration host factor, a specific DNA-binding protein that functions in genetic recombination as well as in transcriptional and translational control. The sequence is that of Integration host factor subunit alpha from Rhizorhabdus wittichii (strain DSM 6014 / CCUG 31198 / JCM 15750 / NBRC 105917 / EY 4224 / RW1) (Sphingomonas wittichii).